The primary structure comprises 327 residues: Ribose-phosphate pyrophosphokinase (327 aa).

51-53 (DGE) lines the ATP pocket. Residues His144 and Asp183 each contribute to the Mg(2+) site. Lys207 is an active-site residue. D-ribose 5-phosphate contacts are provided by residues Arg209, Asp233, and 237–241 (DTGGT).

It belongs to the ribose-phosphate pyrophosphokinase family. Class I subfamily. In terms of assembly, homohexamer. The cofactor is Mg(2+).

It is found in the cytoplasm. The enzyme catalyses D-ribose 5-phosphate + ATP = 5-phospho-alpha-D-ribose 1-diphosphate + AMP + H(+). The protein operates within metabolic intermediate biosynthesis; 5-phospho-alpha-D-ribose 1-diphosphate biosynthesis; 5-phospho-alpha-D-ribose 1-diphosphate from D-ribose 5-phosphate (route I): step 1/1. Involved in the biosynthesis of the central metabolite phospho-alpha-D-ribosyl-1-pyrophosphate (PRPP) via the transfer of pyrophosphoryl group from ATP to 1-hydroxyl of ribose-5-phosphate (Rib-5-P). This is Ribose-phosphate pyrophosphokinase from Prochlorococcus marinus (strain SARG / CCMP1375 / SS120).